A 168-amino-acid chain; its full sequence is Protein A40 (168 aa).

Residues 1-9 (MNKPKTDYA) lie on the Cytoplasmic side of the membrane. Residues 10–30 (GYACCVICGLIVGIIFTATLL) traverse the membrane as a helical; Signal-anchor for type II membrane protein segment. At 31–168 (KVVERKLVHT…TTFLSYHYFG (138 aa)) the chain is on the extracellular side. One can recognise a C-type lectin domain in the interval 63-168 (YNNKCIHLST…TTFLSYHYFG (106 aa)).

This sequence belongs to the poxviridae A40 protein family.

The protein localises to the host membrane. The sequence is that of Protein A40 from Homo sapiens (Human).